Here is a 262-residue protein sequence, read N- to C-terminus: Zinc finger protein ehn-3 (262 aa).

4 C2H2-type zinc fingers span residues 2–24, 30–52, 59–84, and 92–115; these read EKCDICHQKFSNKTNLNRHKVMH, FECQFCRRPFFRNDRMKEHMMTH, FECPITACNSKFNSFTSLQFHVDSEH, and AKCKSCIKWFNSSHRLLLHFHTAH. Positions 179–204 are disordered; the sequence is SVKSAKELSPTPSTEIETPEEEELDG. A compositionally biased stretch (low complexity) spans 185–194; it reads ELSPTPSTEI. Residues 195 to 204 show a composition bias toward acidic residues; sequence ETPEEEELDG. 2 C2H2-type zinc fingers span residues 208–230 and 236–260; these read WYCDYCKIRFDDKVMWYLHSGLH and FKCSLCGSLCDGKYDFAAHLVYANH.

This sequence belongs to the krueppel C2H2-type zinc-finger protein family.

It is found in the nucleus. Functionally, together with the zinc finger protein ztf-16, plays a role in gonadogenesis, specifically in somatic gonad precursor cell development. This is possibly by regulating tra-1 gene expression. In terms of biological role, required for proper gonadal primordium assembly and somatic gonad precursor cell morphology. The chain is Zinc finger protein ehn-3 from Caenorhabditis elegans.